A 236-amino-acid polypeptide reads, in one-letter code: Mitochondrial inner membrane protease ATP23 (236 aa).

Histidine 136 contributes to the a divalent metal cation binding site. The active site involves glutamate 137. Histidine 140 contacts a divalent metal cation.

This sequence belongs to the peptidase M76 family.

Its subcellular location is the mitochondrion inner membrane. Its function is as follows. Has a dual role in the assembly of mitochondrial ATPase. Acts as a protease that removes N-terminal residues of mitochondrial ATPase CF(0) subunit 6 at the intermembrane space side. Also involved in the correct assembly of the membrane-embedded ATPase CF(0) particle, probably mediating association of subunit 6 with the subunit 9 ring. This Debaryomyces hansenii (strain ATCC 36239 / CBS 767 / BCRC 21394 / JCM 1990 / NBRC 0083 / IGC 2968) (Yeast) protein is Mitochondrial inner membrane protease ATP23 (ATP23).